Consider the following 406-residue polypeptide: Peptidase T (406 aa).

His78 serves as a coordination point for Zn(2+). Asp80 is a catalytic residue. Asp139 is a Zn(2+) binding site. Glu173 functions as the Proton acceptor in the catalytic mechanism. Zn(2+) contacts are provided by Glu174, Asp196, and His378.

This sequence belongs to the peptidase M20B family. The cofactor is Zn(2+).

It is found in the cytoplasm. The catalysed reaction is Release of the N-terminal residue from a tripeptide.. Cleaves the N-terminal amino acid of tripeptides. This Clostridium perfringens (strain SM101 / Type A) protein is Peptidase T.